The following is a 188-amino-acid chain: dITP/XTP pyrophosphatase (188 aa).

Residue Thr-7–Lys-12 coordinates substrate. 2 residues coordinate Mg(2+): Glu-36 and Asp-65. The Proton acceptor role is filled by Asp-65. Substrate-binding positions include Ser-66, Phe-141–Asp-144, Lys-164, and His-169–Arg-170.

It belongs to the HAM1 NTPase family. In terms of assembly, homodimer. The cofactor is Mg(2+).

It catalyses the reaction XTP + H2O = XMP + diphosphate + H(+). It carries out the reaction dITP + H2O = dIMP + diphosphate + H(+). The catalysed reaction is ITP + H2O = IMP + diphosphate + H(+). Pyrophosphatase that catalyzes the hydrolysis of nucleoside triphosphates to their monophosphate derivatives, with a high preference for the non-canonical purine nucleotides XTP (xanthosine triphosphate), dITP (deoxyinosine triphosphate) and ITP. Seems to function as a house-cleaning enzyme that removes non-canonical purine nucleotides from the nucleotide pool, thus preventing their incorporation into DNA/RNA and avoiding chromosomal lesions. The sequence is that of dITP/XTP pyrophosphatase from Methanopyrus kandleri (strain AV19 / DSM 6324 / JCM 9639 / NBRC 100938).